Here is a 281-residue protein sequence, read N- to C-terminus: 2-dehydro-3-deoxyphosphooctonate aldolase (281 aa).

It belongs to the KdsA family.

The protein resides in the cytoplasm. It catalyses the reaction D-arabinose 5-phosphate + phosphoenolpyruvate + H2O = 3-deoxy-alpha-D-manno-2-octulosonate-8-phosphate + phosphate. It participates in carbohydrate biosynthesis; 3-deoxy-D-manno-octulosonate biosynthesis; 3-deoxy-D-manno-octulosonate from D-ribulose 5-phosphate: step 2/3. Its pathway is bacterial outer membrane biogenesis; lipopolysaccharide biosynthesis. The protein is 2-dehydro-3-deoxyphosphooctonate aldolase of Hahella chejuensis (strain KCTC 2396).